The following is a 184-amino-acid chain: Holliday junction branch migration complex subunit RuvA (184 aa).

The interval 1 to 62 (MIVGLVGEVL…EDSESLYGFV (62 aa)) is domain I. A domain II region spans residues 63–134 (DINEKKMFDR…ELGEFDISES (72 aa)). A flexible linker region spans residues 134-135 (SN). Residues 136–184 (VTSSAFQEASMALQSLGFKKEQIQKALQECTATDTASLVKEALKKIQKL) form a domain III region.

The protein belongs to the RuvA family. In terms of assembly, homotetramer. Forms an RuvA(8)-RuvB(12)-Holliday junction (HJ) complex. HJ DNA is sandwiched between 2 RuvA tetramers; dsDNA enters through RuvA and exits via RuvB. An RuvB hexamer assembles on each DNA strand where it exits the tetramer. Each RuvB hexamer is contacted by two RuvA subunits (via domain III) on 2 adjacent RuvB subunits; this complex drives branch migration. In the full resolvosome a probable DNA-RuvA(4)-RuvB(12)-RuvC(2) complex forms which resolves the HJ.

The protein localises to the cytoplasm. The RuvA-RuvB-RuvC complex processes Holliday junction (HJ) DNA during genetic recombination and DNA repair, while the RuvA-RuvB complex plays an important role in the rescue of blocked DNA replication forks via replication fork reversal (RFR). RuvA specifically binds to HJ cruciform DNA, conferring on it an open structure. The RuvB hexamer acts as an ATP-dependent pump, pulling dsDNA into and through the RuvAB complex. HJ branch migration allows RuvC to scan DNA until it finds its consensus sequence, where it cleaves and resolves the cruciform DNA. This is Holliday junction branch migration complex subunit RuvA from Nitratiruptor sp. (strain SB155-2).